We begin with the raw amino-acid sequence, 1544 residues long: Lysine-specific demethylase 5B (1544 aa).

Over residues 1–14 (MEPATTLPPGPRPA) the composition is skewed to pro residues. Residues 1–22 (MEPATTLPPGPRPALPLGGPGP) form a disordered region. In terms of domain architecture, JmjN spans 32–73 (CPVFEPSWEEFADPFAFIHKIRPIAEQTGICKVRPPPDWQPP). Residues 97–187 (TRVKLNFLDQ…ILNPYNLFLS (91 aa)) form the ARID domain. Residues K148, K204, K209, K242, K274, and K278 each participate in a glycyl lysine isopeptide (Lys-Gly) (interchain with G-Cter in SUMO2) cross-link. The disordered stretch occupies residues 200–228 (TSDTKDKEYKPHDIPQRQSVQPAETCPPA). The span at 202–214 (DTKDKEYKPHDIP) shows a compositional bias: basic and acidic residues. The disordered stretch occupies residues 269–297 (NEKEMKSTIKQEPTEKKDCELESEKEKPK). The segment at 309–359 (LYVCLLCGSGNDEDRLLLCDGCDDSYHTFCLVPPLHDVPKGDWRCPKCLAQ) adopts a PHD-type 1 zinc-finger fold. Y425 serves as a coordination point for 2-oxoglutarate. The region spanning 453–619 (EYLDSGWNLN…LGRQCVEHYR (167 aa)) is the JmjC domain. H499 and E501 together coordinate Fe cation. 2-oxoglutarate-binding residues include S507, N509, and K517. H587 contacts Fe cation. The C5HC2 zinc finger occupies 692 to 744 (CIKCKTTCFMSAISCSCKPGLLVCLHHVKELCSCPPYKYNLRYRYTLDDLYPM). Residue K769 forms a Glycyl lysine isopeptide (Lys-Gly) (interchain with G-Cter in SUMO2) linkage. The residue at position 832 (K832) is an N6-acetyllysine. Position 986 is a phosphoserine (S986). The segment at 1176–1224 (MKVCLCQKTPATPMIQCELCRDAFHTSCVAAPSISQSSRIWLCPHCRRS) adopts a PHD-type 2 zinc-finger fold. Residues 1297–1314 (QASATDKVSQPPGTTSFS) are compositionally biased toward polar residues. The tract at residues 1297 to 1318 (QASATDKVSQPPGTTSFSLPDD) is disordered. S1328 carries the post-translational modification Phosphoserine. The span at 1374 to 1388 (PSSVQQADRSSPVRS) shows a compositional bias: polar residues. The disordered stretch occupies residues 1374-1447 (PSSVQQADRS…IKLSHPKDMD (74 aa)). Basic and acidic residues predominate over residues 1389 to 1427 (SSEKNDCLRGKRDAINSPERKLKRRPEREGLPSERWDRV). A compositionally biased stretch (basic residues) spans 1428 to 1441 (KHMRTPQKKKIKLS). A Glycyl lysine isopeptide (Lys-Gly) (interchain with G-Cter in SUMO2) cross-link involves residue K1450. At S1456 the chain carries Phosphoserine. A PHD-type 3 zinc finger spans residues 1484–1538 (DAICPAVSCLQPEGDEVDWVQCDGSCNQWFHQVCVGVSPEMAEKEDYICVRCTGK).

This sequence belongs to the JARID1 histone demethylase family. As to quaternary structure, interacts with FOXG1B, PAX9, MYC, MYCN and RB1. Interacts with HDAC1, HDAC4, HDAC5 and HDAC7. Interacts (via PHD-type 1 zinc finger) with histone H3 unmodified at 'Lys-4'; the interaction is inhibited when histone H3 is methylated at 'Arg-2' or 'Lys-4'. Fe(2+) serves as cofactor. Present at highest levels in testis, where it is enriched in spermatogonia and pachytene cells (at protein level).

The protein resides in the nucleus. It catalyses the reaction N(6),N(6),N(6)-trimethyl-L-lysyl(4)-[histone H3] + 3 2-oxoglutarate + 3 O2 = L-lysyl(4)-[histone H3] + 3 formaldehyde + 3 succinate + 3 CO2. Functionally, histone demethylase that demethylates 'Lys-4' of histone H3, thereby playing a central role in histone code. Does not demethylate histone H3 'Lys-9' or H3 'Lys-27'. Demethylates trimethylated, dimethylated and monomethylated H3 'Lys-4'. Acts as a transcriptional corepressor for FOXG1B and PAX9. Represses the CLOCK-BMAL1 heterodimer-mediated transcriptional activation of the core clock component PER2. The protein is Lysine-specific demethylase 5B (Kdm5b) of Mus musculus (Mouse).